A 180-amino-acid polypeptide reads, in one-letter code: ATP-dependent protease subunit HslV (180 aa).

T5 is a catalytic residue. Residues G161, C164, and T167 each coordinate Na(+).

Belongs to the peptidase T1B family. HslV subfamily. A double ring-shaped homohexamer of HslV is capped on each side by a ring-shaped HslU homohexamer. The assembly of the HslU/HslV complex is dependent on binding of ATP.

Its subcellular location is the cytoplasm. The catalysed reaction is ATP-dependent cleavage of peptide bonds with broad specificity.. Allosterically activated by HslU binding. In terms of biological role, protease subunit of a proteasome-like degradation complex believed to be a general protein degrading machinery. The sequence is that of ATP-dependent protease subunit HslV from Campylobacter curvus (strain 525.92).